The sequence spans 403 residues: MAKIMAVNAGSSSLKFQLLEMPNETMIAVGLVERVGKDDAIFTIKYGEGQKFTDVLPLATHKEAVELSLEKLMEFGIISSYDEIKGVGHRVLHGKEKYADSVIITEDVMQDIESYTELGPLHIPPNLIGIRAFQAILPNVPQVAVFDTAFHQTMPEENFLYSLPYEYYTEYGIRKYGFHGTSHKYVTERASELLGRPLQDLRLISCHLGSGASIAAVAGGESIDTTMGFTPLEGITMGTRSGSLDPALIPFLMEKTGKTAEDVLNVMNKESGIYGLSGLSSDLRDVQTAAKEGNHRSEMALRIFANRIHGYIGQYAAEMNGVDAIIFTAGVGENSDSIRERVLRGLEFMGVYWDPSLNNGARGEELFINYPHSPVKVIIIPTNEELMIARDTVRVGGLVEQNA.

Asn-8 contacts Mg(2+). Lys-15 serves as a coordination point for ATP. Arg-90 is a binding site for substrate. The active-site Proton donor/acceptor is the Asp-147. ATP contacts are provided by residues His-207 to Gly-211, Asp-282 to Arg-284, and Gly-330 to Asn-334. Glu-384 is a binding site for Mg(2+).

The protein belongs to the acetokinase family. In terms of assembly, homodimer. It depends on Mg(2+) as a cofactor. Mn(2+) serves as cofactor.

The protein localises to the cytoplasm. It catalyses the reaction acetate + ATP = acetyl phosphate + ADP. It participates in metabolic intermediate biosynthesis; acetyl-CoA biosynthesis; acetyl-CoA from acetate: step 1/2. Its function is as follows. Catalyzes the formation of acetyl phosphate from acetate and ATP. Can also catalyze the reverse reaction. The chain is Acetate kinase from Exiguobacterium sibiricum (strain DSM 17290 / CCUG 55495 / CIP 109462 / JCM 13490 / 255-15).